The chain runs to 117 residues: Ig heavy chain V region 102 (117 aa).

An N-terminal signal peptide occupies residues Met-1–Ser-19. Positions His-20–Thr-49 are framework-1. Residues Cys-41 and Cys-115 are joined by a disulfide bond. Residues Ser-50 to His-54 are complementarity-determining-1. The tract at residues Trp-55–Gly-68 is framework-2. The interval Arg-69–Gly-85 is complementarity-determining-2. The tract at residues Lys-86–Ile-117 is framework-3.

This chain is Ig heavy chain V region 102, found in Mus musculus (Mouse).